The following is a 291-amino-acid chain: F-box protein PP2-A12 (291 aa).

An F-box domain is found at Lys25 to Lys71.

This chain is F-box protein PP2-A12 (P2A12), found in Arabidopsis thaliana (Mouse-ear cress).